A 956-amino-acid chain; its full sequence is Calsyntenin-3 (956 aa).

The N-terminal stretch at 1–19 (MTLLLVSLLLASLLQISSG) is a signal peptide. Residues 1–21 (MTLLLVSLLLASLLQISSGNK) are Cytoplasmic-facing. Residues 20-847 (NKANKHKPWI…SHRNSMVPSA (828 aa)) lie on the Extracellular side of the membrane. An intramembrane region (helical) is located at residues 22–42 (ANKHKPWIEAEYQGIVMENDN). Cadherin domains are found at residues 29–145 (IEAE…APVF) and 146–246 (VERL…KPSW). Residues 43–73 (TVLLNPPLFALDKDAPLRYAGEICGFRLHGS) are Cytoplasmic-facing. The segment at residues 74 to 94 (GVPFEAVILDKATGEGLIRAK) is an intramembrane region (helical). The Cytoplasmic segment spans residues 95 to 139 (EPVDCEAQKEHTFTIQAYDCGEGPDGTNTKKSHKATVHVRVNDVN). The helical intramembrane region spans 140–160 (EFAPVFVERLYRAAVTEGKLY). Over 161–248 (DRILRVEAID…KPTCKPSWQG (88 aa)) the chain is Cytoplasmic. Residues 249–269 (WNKRIEYAPGAGSLALFPGIR) form a helical membrane-spanning segment. The Lumenal segment spans residues 270–357 (LETCDEPLWN…GTQAVQVPLG (88 aa)). 5 N-linked (GlcNAc...) asparagine glycosylation sites follow: asparagine 299, asparagine 327, asparagine 347, asparagine 507, and asparagine 740. The chain crosses the membrane as a helical span at residues 848–868 (ATLIIVVCVGFLVLMVILGLV). The Cytoplasmic portion of the chain corresponds to 869–956 (RIHSLHRRVS…RIIESPPHRY (88 aa)). The tract at residues 916–956 (QTCVAGVAGGQQEEEDSSDSEAADSPSSDERRIIESPPHRY) is disordered. The span at 927-937 (QEEEDSSDSEA) shows a compositional bias: acidic residues. A compositionally biased stretch (basic and acidic residues) spans 943-956 (SDERRIIESPPHRY).

Belongs to the calsyntenin family. In terms of assembly, interacts (via cadherin domains) with both alpha and beta isoforms of neurexins (NRXN1, NRXN2 and NRXN3). Directly interacts with APBA2. Forms a tripartite complex with APBA2 and APP. Interacts with low affinity with KLC1. Interacts with SLC23A2/SVCT2. As to quaternary structure, interacts with CIDEA; inhibiting the lipid transferase activity of CIDEA. Interacts with CIDEC; inhibiting the lipid transferase activity of CIDEC. In terms of processing, proteolytically processed under normal cellular conditions. A primary zeta-cleavage generates a large extracellular (soluble) N-terminal domain (sAlc) and a short C-terminal transmembrane fragment (CTF1). A secondary cleavage catalyzed by gamma-secretase within the transmembrane domain releases the beta-Alc-beta chain in the extracellular milieu and produces an intracellular fragment (AlcICD). This processing is strongly suppressed in the tripartite complex formed with APBA2 and APP, which seems to prevent the association with gamma-secretase. Ubiquitinated: endoplasmic reticulum-localized protein is ubiquitinated and degraded by the endoplasmic reticulum-associated degradation (ERAD) pathway. In terms of tissue distribution, restricted to the brain (at protein level). In the cerebral cortex, found in the somas and neuropil of all layers. Expressed at highest levels in neurons of cortical layer 5 and, at lower levels, in neurons of the upper layers. Highly expressed in Purkinje cells. Also found in a few scattered interneurons throughout the granule cell layer and occasionally in neurons in the molecular layer (at protein level). In all layers, high levels in a subpopulation of presumptive GABAergic neurons (based on morphology). Expression is restricted to adipose tissue, with high expression in thermogenic adipocytes (brown adipose tissue).

The protein localises to the postsynaptic cell membrane. It localises to the endoplasmic reticulum membrane. It is found in the golgi apparatus membrane. Its subcellular location is the cell projection. The protein resides in the dendrite. The protein localises to the lipid droplet. In terms of biological role, postsynaptic adhesion molecule that binds to presynaptic neurexins to mediate both excitatory and inhibitory synapse formation. Promotes synapse development by acting as a cell adhesion molecule at the postsynaptic membrane, which associates with both neurexin-alpha and neurexin-beta proteins at the presynaptic membrane. Regulates the balance between excitatory and inhibitory synapses by inhibiting formation of excitatory parallel-fiber synapses and promoting formation of inhibitory synapses in the same neuron. May also be involved in ascorbate (vitamin C) uptake via its interaction with SLC23A2/SVCT2. Complex formation with APBA2 and APP, stabilizes APP metabolism and enhances APBA2-mediated suppression of beta-APP40 secretion, due to the retardation of intracellular APP maturation. Its function is as follows. Adipose-specific isoform that plays a key role in adaptive thermogenesis. Facilitates the efficient use of stored triglyceride by promoting multilocular morphology of thermogenic adipocytes: acts by inhibiting the activity of CIDEA and CIDEC on lipid droplets, thereby preventing lipid droplet fusion and facilitating lipid utilization. May also participate in adaptive thermogenesis by promoting sympathetic innervation of thermogenic adipose tissue: acts by driving secretion of neurotrophic factor S100B from brown adipocytes, stimulating neurite outgrowth from sympathetic neurons. The polypeptide is Calsyntenin-3 (Mus musculus (Mouse)).